A 449-amino-acid chain; its full sequence is Probable cysteine proteinase 224L (449 aa).

Residues cysteine 99, histidine 292, and asparagine 322 contribute to the active site. The helical transmembrane segment at 429 to 449 (DTQIVFIFFLSVVILFIFIIL) threads the bilayer.

This sequence belongs to the peptidase C1 family.

The protein resides in the membrane. In terms of biological role, probable cysteine protease. This chain is Probable cysteine proteinase 224L, found in Acheta domesticus (House cricket).